Here is a 1456-residue protein sequence, read N- to C-terminus: Macrophage mannose receptor 1 (1456 aa).

An N-terminal signal peptide occupies residues 1–18 (MRLPLLLVFASVIPGAVL). Topologically, residues 19–1389 (LLDTRQFLIY…DPSKPSSNVA (1371 aa)) are extracellular. A Ricin B-type lectin domain is found at 22-142 (TRQFLIYNED…SGLWSRWKIY (121 aa)). Cystine bridges form between Cys35–Cys49 and Cys74–Cys91. N-linked (GlcNAc...) asparagine glycosylation occurs at Asn104. One can recognise a Fibronectin type-II domain in the interval 163 to 211 (ANGATCAFPFKFENKWYADCTSAGRSDGWLWCGTTTDYDTDKLFGYCPL). Cystine bridges form between Cys168-Cys194, Cys182-Cys209, Cys247-Cys340, and Cys316-Cys332. Positions 225-341 (LTSVSYQINS…CVQKLGYICK (117 aa)) constitute a C-type lectin 1 domain. Asn344 is a glycosylation site (N-linked (GlcNAc...) asparagine). C-type lectin domains are found at residues 369–487 (YAGH…YICK), 511–626 (HHFY…FVCK), 655–778 (RTSL…WICQ), and 807–923 (YKDY…FICQ). 2 cysteine pairs are disulfide-bonded: Cys391–Cys486 and Cys463–Cys478. The N-linked (GlcNAc...) asparagine glycan is linked to Asn529. 7 disulfide bridges follow: Cys532-Cys625, Cys600-Cys617, Cys646-Cys659, Cys680-Cys777, Cys753-Cys769, Cys828-Cys922, and Cys899-Cys914. N-linked (GlcNAc...) asparagine glycosylation is found at Asn926 and Asn930. C-type lectin domains lie at 952–1080 (YSNK…YICQ), 1102–1213 (YGKS…FLCK), and 1241–1356 (FHGH…YICK). 6 disulfide bridges follow: Cys977-Cys1079, Cys1052-Cys1071, Cys1123-Cys1212, Cys1190-Cys1204, Cys1263-Cys1355, and Cys1332-Cys1347. N-linked (GlcNAc...) asparagine glycosylation occurs at Asn1160. A glycan (N-linked (GlcNAc...) asparagine) is linked at Asn1205. Residues 1390-1410 (GVVIIVILLILTGAGLAAYFF) traverse the membrane as a helical segment. Residues 1411–1456 (YKKRRVHLPQEGAFENTLYFNSQSSPGTSDMKDLVGNIEQNEHSVI) are Cytoplasmic-facing.

(Microbial infection) Interacts with Dengue virus. In terms of assembly, (Microbial infection) May act as a receptor for hepatitis B virus, enabling uptake of the virus in hepatic dendritic cells.

The protein localises to the endosome membrane. It localises to the cell membrane. Mediates the endocytosis of glycoproteins by macrophages. Binds both sulfated and non-sulfated polysaccharide chains. Functionally, (Microbial infection) Acts as a phagocytic receptor for bacteria, fungi and other pathogens. In terms of biological role, (Microbial infection) Acts as a receptor for Dengue virus envelope protein E. Its function is as follows. (Microbial infection) Interacts with Hepatitis B virus envelope protein. The chain is Macrophage mannose receptor 1 (MRC1) from Homo sapiens (Human).